Reading from the N-terminus, the 303-residue chain is Bifunctional protein FolD (303 aa).

Residues 169–171 (GRG), Thr-196, and Val-237 each bind NADP(+).

This sequence belongs to the tetrahydrofolate dehydrogenase/cyclohydrolase family. As to quaternary structure, homodimer.

It catalyses the reaction (6R)-5,10-methylene-5,6,7,8-tetrahydrofolate + NADP(+) = (6R)-5,10-methenyltetrahydrofolate + NADPH. It carries out the reaction (6R)-5,10-methenyltetrahydrofolate + H2O = (6R)-10-formyltetrahydrofolate + H(+). The protein operates within one-carbon metabolism; tetrahydrofolate interconversion. Catalyzes the oxidation of 5,10-methylenetetrahydrofolate to 5,10-methenyltetrahydrofolate and then the hydrolysis of 5,10-methenyltetrahydrofolate to 10-formyltetrahydrofolate. The chain is Bifunctional protein FolD from Micrococcus luteus (strain ATCC 4698 / DSM 20030 / JCM 1464 / CCM 169 / CCUG 5858 / IAM 1056 / NBRC 3333 / NCIMB 9278 / NCTC 2665 / VKM Ac-2230) (Micrococcus lysodeikticus).